Consider the following 234-residue polypeptide: MQHFWVVGTDTDVGKTIVTTLLMCQLQRLGLEIIPFKPVQTGEIYDNLHSYYADTAMYEKYSLQVLNKEHMNGYSFKEAASPHFAAQLEGQQIDVENLLQRIQFLQESYDVVIAEGAGGLFVPLDVQQSITLLDVIVSSKLPVVLVTRTTLGTINHTLLTMEALQSRQIDVLGIVFNGDTGSMMEQDNIHTILQYHPLPYAIIPRLQDISELANINITHTTLFERLYGNDPRNN.

Aspartate 12–isoleucine 17 contributes to the ATP binding site. Threonine 16 provides a ligand contact to Mg(2+). The active site involves lysine 37. Threonine 41 is a binding site for substrate. Residues aspartate 54 and glutamate 115–glycine 118 contribute to the ATP site. Aspartate 54 and glutamate 115 together coordinate Mg(2+).

This sequence belongs to the dethiobiotin synthetase family. In terms of assembly, homodimer. Requires Mg(2+) as cofactor.

It is found in the cytoplasm. It catalyses the reaction (7R,8S)-7,8-diammoniononanoate + CO2 + ATP = (4R,5S)-dethiobiotin + ADP + phosphate + 3 H(+). The protein operates within cofactor biosynthesis; biotin biosynthesis; biotin from 7,8-diaminononanoate: step 1/2. Its function is as follows. Catalyzes a mechanistically unusual reaction, the ATP-dependent insertion of CO2 between the N7 and N8 nitrogen atoms of 7,8-diaminopelargonic acid (DAPA, also called 7,8-diammoniononanoate) to form a ureido ring. The sequence is that of ATP-dependent dethiobiotin synthetase BioD from Lysinibacillus sphaericus (strain C3-41).